Here is a 977-residue protein sequence, read N- to C-terminus: Glycine dehydrogenase (decarboxylating) (977 aa).

Lys702 bears the N6-(pyridoxal phosphate)lysine mark.

Belongs to the GcvP family. As to quaternary structure, the glycine cleavage system is composed of four proteins: P, T, L and H. It depends on pyridoxal 5'-phosphate as a cofactor.

It catalyses the reaction N(6)-[(R)-lipoyl]-L-lysyl-[glycine-cleavage complex H protein] + glycine + H(+) = N(6)-[(R)-S(8)-aminomethyldihydrolipoyl]-L-lysyl-[glycine-cleavage complex H protein] + CO2. The glycine cleavage system catalyzes the degradation of glycine. The P protein binds the alpha-amino group of glycine through its pyridoxal phosphate cofactor; CO(2) is released and the remaining methylamine moiety is then transferred to the lipoamide cofactor of the H protein. The sequence is that of Glycine dehydrogenase (decarboxylating) from Xanthomonas axonopodis pv. citri (strain 306).